The chain runs to 449 residues: Phosphoribosylamine--glycine ligase (449 aa).

The ATP-grasp domain occupies 112–325; sequence RELMEKYDIP…IVTLHASIAE (214 aa). Residue 139 to 202 participates in ATP binding; that stretch reads IDELGKPVAV…EEKCVGEEYT (64 aa). Mg(2+) is bound by residues Q283, E295, and N297. Residues Q283, E295, and N297 each contribute to the Mn(2+) site.

The protein belongs to the GARS family. The cofactor is Mg(2+). Requires Mn(2+) as cofactor.

It carries out the reaction 5-phospho-beta-D-ribosylamine + glycine + ATP = N(1)-(5-phospho-beta-D-ribosyl)glycinamide + ADP + phosphate + H(+). Its pathway is purine metabolism; IMP biosynthesis via de novo pathway; N(1)-(5-phospho-D-ribosyl)glycinamide from 5-phospho-alpha-D-ribose 1-diphosphate: step 2/2. This chain is Phosphoribosylamine--glycine ligase, found in Methanopyrus kandleri (strain AV19 / DSM 6324 / JCM 9639 / NBRC 100938).